The following is a 225-amino-acid chain: Protein-L-isoaspartate O-methyltransferase (225 aa).

Ser-75 is an active-site residue.

It belongs to the methyltransferase superfamily. L-isoaspartyl/D-aspartyl protein methyltransferase family.

It is found in the cytoplasm. It catalyses the reaction [protein]-L-isoaspartate + S-adenosyl-L-methionine = [protein]-L-isoaspartate alpha-methyl ester + S-adenosyl-L-homocysteine. In terms of biological role, catalyzes the methyl esterification of L-isoaspartyl residues in peptides and proteins that result from spontaneous decomposition of normal L-aspartyl and L-asparaginyl residues. It plays a role in the repair and/or degradation of damaged proteins. This chain is Protein-L-isoaspartate O-methyltransferase, found in Xanthomonas axonopodis pv. citri (strain 306).